The primary structure comprises 1828 residues: Dedicator of cytokinesis protein 2 (1828 aa).

Residues 8–69 enclose the SH3 domain; it reads DKERHGVAIY…PTSFIHLKEV (62 aa). Position 304 is an N6-acetyllysine (K304). The C2 DOCK-type domain maps to 423-607; it reads RNDIYITLLQ…DVFSISTLVC (185 aa). 2 positions are modified to phosphoserine: S588 and S593. K738 is subject to N6-acetyllysine. Residues 1210-1621 form the DOCKER domain; sequence YKDNNREEMY…VEKEYGVREM (412 aa). The disordered stretch occupies residues 1652 to 1703; the sequence is SDCSTPSKVPAESFDLESAPPKTPKVEEEPISPGSTLPEVKLRRSKKRTKRS. Phosphoserine is present on residues S1683, S1704, S1729, and S1782.

This sequence belongs to the DOCK family. Homodimer. Interacts with RAC1 and RAC2. Interacts with CRKL and VAV. Interacts with CD3Z. In terms of tissue distribution, specifically expressed in hematopoietic cells.

It is found in the endomembrane system. The protein resides in the cytoplasm. Its subcellular location is the cytoskeleton. Functionally, involved in cytoskeletal rearrangements required for lymphocyte migration in response of chemokines. Activates RAC1 and RAC2, but not CDC42, by functioning as a guanine nucleotide exchange factor (GEF), which exchanges bound GDP for free GTP. May also participate in IL2 transcriptional activation via the activation of RAC2. The polypeptide is Dedicator of cytokinesis protein 2 (Dock2) (Mus musculus (Mouse)).